Reading from the N-terminus, the 728-residue chain is Microtubule-associated protein VP5 (728 aa).

It belongs to the reoviridae microtubule-associated protein family.

Its subcellular location is the virion. It is found in the host cytoplasm. The protein localises to the host cytoskeleton. Functionally, minor inner capsid component. Displays NTPase and RNA 5'-triphosphatase (RTPase) activities. May function as a cofactor of polymerase. Associates with microtubules and plays a role in the formation, structural organization and morphology of viral inclusions, where the assembly of cores and the replication of viral RNA occur. The chain is Microtubule-associated protein VP5 (S5) from Aquareovirus C (isolate Golden shiner/USA/GSRV/1977) (AQRV-C).